The following is a 208-amino-acid chain: Probable nicotinate-nucleotide adenylyltransferase (208 aa).

The protein belongs to the NadD family.

The catalysed reaction is nicotinate beta-D-ribonucleotide + ATP + H(+) = deamido-NAD(+) + diphosphate. It functions in the pathway cofactor biosynthesis; NAD(+) biosynthesis; deamido-NAD(+) from nicotinate D-ribonucleotide: step 1/1. Catalyzes the reversible adenylation of nicotinate mononucleotide (NaMN) to nicotinic acid adenine dinucleotide (NaAD). This Nostoc sp. (strain PCC 7120 / SAG 25.82 / UTEX 2576) protein is Probable nicotinate-nucleotide adenylyltransferase.